The following is a 578-amino-acid chain: Lysine--tRNA ligase (578 aa).

Positions 414 and 421 each coordinate Mg(2+).

This sequence belongs to the class-II aminoacyl-tRNA synthetase family. As to quaternary structure, homodimer. The cofactor is Mg(2+).

It is found in the cytoplasm. It carries out the reaction tRNA(Lys) + L-lysine + ATP = L-lysyl-tRNA(Lys) + AMP + diphosphate. In Porphyromonas gingivalis (strain ATCC 33277 / DSM 20709 / CIP 103683 / JCM 12257 / NCTC 11834 / 2561), this protein is Lysine--tRNA ligase.